We begin with the raw amino-acid sequence, 171 residues long: 3-hydroxydecanoyl-[acyl-carrier-protein] dehydratase (171 aa).

His70 is a catalytic residue.

It belongs to the thioester dehydratase family. FabA subfamily. In terms of assembly, homodimer.

It localises to the cytoplasm. It carries out the reaction a (3R)-hydroxyacyl-[ACP] = a (2E)-enoyl-[ACP] + H2O. The catalysed reaction is (3R)-hydroxydecanoyl-[ACP] = (2E)-decenoyl-[ACP] + H2O. It catalyses the reaction (2E)-decenoyl-[ACP] = (3Z)-decenoyl-[ACP]. The protein operates within lipid metabolism; fatty acid biosynthesis. In terms of biological role, necessary for the introduction of cis unsaturation into fatty acids. Catalyzes the dehydration of (3R)-3-hydroxydecanoyl-ACP to E-(2)-decenoyl-ACP and then its isomerization to Z-(3)-decenoyl-ACP. Can catalyze the dehydratase reaction for beta-hydroxyacyl-ACPs with saturated chain lengths up to 16:0, being most active on intermediate chain length. The polypeptide is 3-hydroxydecanoyl-[acyl-carrier-protein] dehydratase (Pseudomonas fluorescens (strain ATCC BAA-477 / NRRL B-23932 / Pf-5)).